The following is a 274-amino-acid chain: MTGFGARLAAAKAQRGPLCVGIDPHPELLRAWDLPTTADGLAAFCDICVEAFAGFAVVKPQVAFFEAYGAAGFAVLERTIAALRSAGVLVLADAKRGDIGTTMAAYAAAWAGDSPLAADAVTASPYLGFGSLRPLLEAAAAHDRGVFVLAATSNPEGATVQRAAFDGRTVAQLVVDQAAVVNRSTNPAGPGYVGVVVGATVLQPPDLSALGGPVLVPGLGVQGGRPEALAGLGGAEPGQLLPAVAREVLRAGPDVAELRGAADRMLDAVAYLDV.

The active-site Proton donor is the Lys-95.

Belongs to the OMP decarboxylase family. Type 2 subfamily.

The catalysed reaction is orotidine 5'-phosphate + H(+) = UMP + CO2. The protein operates within pyrimidine metabolism; UMP biosynthesis via de novo pathway; UMP from orotate: step 2/2. This chain is Orotidine 5'-phosphate decarboxylase, found in Mycobacterium avium (strain 104).